We begin with the raw amino-acid sequence, 603 residues long: DNA mismatch repair protein MutL (603 aa).

This sequence belongs to the DNA mismatch repair MutL/HexB family.

This protein is involved in the repair of mismatches in DNA. It is required for dam-dependent methyl-directed DNA mismatch repair. May act as a 'molecular matchmaker', a protein that promotes the formation of a stable complex between two or more DNA-binding proteins in an ATP-dependent manner without itself being part of a final effector complex. The sequence is that of DNA mismatch repair protein MutL from Rhodopseudomonas palustris (strain BisA53).